A 342-amino-acid chain; its full sequence is 4-hydroxy-2-oxovalerate aldolase 2 (342 aa).

The Pyruvate carboxyltransferase domain maps to 8–260; sequence ITVHDMTLRD…ETGVDVFKIQ (253 aa). Position 16–17 (16–17) interacts with substrate; sequence RD. Residue Asp17 coordinates Mn(2+). His20 (proton acceptor) is an active-site residue. Substrate is bound by residues Ser170 and His199. Mn(2+) is bound by residues His199 and His201. Tyr290 contributes to the substrate binding site.

Belongs to the 4-hydroxy-2-oxovalerate aldolase family.

It catalyses the reaction (S)-4-hydroxy-2-oxopentanoate = acetaldehyde + pyruvate. This Azoarcus sp. (strain BH72) protein is 4-hydroxy-2-oxovalerate aldolase 2 (mhpE).